Here is a 201-residue protein sequence, read N- to C-terminus: 3-isopropylmalate dehydratase small subunit (201 aa).

The protein belongs to the LeuD family. LeuD type 1 subfamily. As to quaternary structure, heterodimer of LeuC and LeuD.

The catalysed reaction is (2R,3S)-3-isopropylmalate = (2S)-2-isopropylmalate. The protein operates within amino-acid biosynthesis; L-leucine biosynthesis; L-leucine from 3-methyl-2-oxobutanoate: step 2/4. Its function is as follows. Catalyzes the isomerization between 2-isopropylmalate and 3-isopropylmalate, via the formation of 2-isopropylmaleate. The sequence is that of 3-isopropylmalate dehydratase small subunit from Micrococcus luteus (strain ATCC 4698 / DSM 20030 / JCM 1464 / CCM 169 / CCUG 5858 / IAM 1056 / NBRC 3333 / NCIMB 9278 / NCTC 2665 / VKM Ac-2230) (Micrococcus lysodeikticus).